A 530-amino-acid chain; its full sequence is MNNARPIRRALISVSDKTGIVEFAQALAERGVDILSTGGTARLLAEQGIAVTEVSDYTGFPEMMDGRVKTLHPKVHGGVLGRRGQDDEVMAKHGINPIDMVVVNLYPFAETVAKEGCTLADAVENIDIGGPTMVRSAAKNHKDVTIVVNASDYHRVITEMDANDTSLTLETRFDLAIAAFEHTAAYDGMIANYFGTMVPSYGENKEGDEESKFPRTFNQQFIKKQDMRYGENSHQAAAFYVEANPQEASVATARQIQGKALSYNNIADTDAALECVKEFNEPACVIVKHANPCGVALGKDILEAYNRAYQTDPTSAFGGIIAFNQELDAETATAIVERQFVEVIIAPSVSAEAMEVVAAKKNVRLLECGEWTTKTTGFDVKRVNGGLLVQDRDQGMVSLDDLKVVSKRQPTEEELKDALFCWKVAKYVKSNAIVYSKGDMTIGVGAGQMSRVYSAKIAGIKAADEGLQVEGCVMASDAFFPFRDGIDAAAEAGIKCVIQPGGSMRDDEVIAAADEHGMAMIFTGMRHFRH.

Positions 1–148 constitute an MGS-like domain; sequence MNNARPIRRA…KNHKDVTIVV (148 aa).

The protein belongs to the PurH family.

It catalyses the reaction (6R)-10-formyltetrahydrofolate + 5-amino-1-(5-phospho-beta-D-ribosyl)imidazole-4-carboxamide = 5-formamido-1-(5-phospho-D-ribosyl)imidazole-4-carboxamide + (6S)-5,6,7,8-tetrahydrofolate. The catalysed reaction is IMP + H2O = 5-formamido-1-(5-phospho-D-ribosyl)imidazole-4-carboxamide. Its pathway is purine metabolism; IMP biosynthesis via de novo pathway; 5-formamido-1-(5-phospho-D-ribosyl)imidazole-4-carboxamide from 5-amino-1-(5-phospho-D-ribosyl)imidazole-4-carboxamide (10-formyl THF route): step 1/1. It functions in the pathway purine metabolism; IMP biosynthesis via de novo pathway; IMP from 5-formamido-1-(5-phospho-D-ribosyl)imidazole-4-carboxamide: step 1/1. The chain is Bifunctional purine biosynthesis protein PurH from Vibrio vulnificus (strain YJ016).